The sequence spans 343 residues: MDLTYIPEDLSSCPKFVNKILSSHQPLFSCPGDNVFGYDWSHDYPLFGNLVIMVSISHFKQLHSPTNFLILSMATTDFLLGFVIMPYSIMRSVESCWYFGDGFCKFHTSFDMMLRLTSIFHLCSIAIDRFYAVCYPLHYTTKMTNSTIKQLLAFCWSVPALFSFGLVLSEADVSGMQSYKILVACFNFCALTFNKFWGTILFTTCFFTPGSIMVGIYGKIFIVSKQHARVISHVPENTKGAVKKHLSKKKDRKAAKTLGIVMGVFLACWLPCFLAVLIDPYLDYSTPILILDLLVWLRYFNSTCNPLIHGFFNPWFQKAFKYIVSGKIFSSHSETANLFPEAH.

The Extracellular segment spans residues 1 to 35 (MDLTYIPEDLSSCPKFVNKILSSHQPLFSCPGDNV). A helical membrane pass occupies residues 36-56 (FGYDWSHDYPLFGNLVIMVSI). Residues 57-68 (SHFKQLHSPTNF) lie on the Cytoplasmic side of the membrane. Residues 69–89 (LILSMATTDFLLGFVIMPYSI) traverse the membrane as a helical segment. The Extracellular portion of the chain corresponds to 90–150 (MRSVESCWYF…TKMTNSTIKQ (61 aa)). Cysteine 104 and cysteine 189 are disulfide-bonded. Asparagine 145 carries an N-linked (GlcNAc...) asparagine glycan. Residues 151 to 168 (LLAFCWSVPALFSFGLVL) form a helical membrane-spanning segment. Topologically, residues 169–172 (SEAD) are cytoplasmic. Residues 173 to 186 (VSGMQSYKILVACF) form an extracellular Loop 2 (ECL2) region. Residues 173-193 (VSGMQSYKILVACFNFCALTF) form a helical membrane-spanning segment. Residues 194–198 (NKFWG) are Extracellular-facing. The chain crosses the membrane as a helical span at residues 199–223 (TILFTTCFFTPGSIMVGIYGKIFIV). Topologically, residues 224–257 (SKQHARVISHVPENTKGAVKKHLSKKKDRKAAKT) are cytoplasmic. Residues 258-278 (LGIVMGVFLACWLPCFLAVLI) traverse the membrane as a helical segment. The Extracellular segment spans residues 279–287 (DPYLDYSTP). Residues 288 to 308 (ILILDLLVWLRYFNSTCNPLI) traverse the membrane as a helical segment. The Cytoplasmic portion of the chain corresponds to 309–343 (HGFFNPWFQKAFKYIVSGKIFSSHSETANLFPEAH).

Belongs to the G-protein coupled receptor 1 family. Not expressed in the pons, thalamus, globus pallidus, caudate, putamen or cerebellum.

Its subcellular location is the cell membrane. Its function is as follows. Putative olfactory receptor activated by several primary trace amines. The polypeptide is Putative trace amine-associated receptor 3 (Homo sapiens (Human)).